Here is a 361-residue protein sequence, read N- to C-terminus: Chorismate synthase (361 aa).

R48 serves as a coordination point for NADP(+). Residues 125–127 (RSS), 238–239 (NA), G278, 293–297 (KPTSS), and R319 each bind FMN.

It belongs to the chorismate synthase family. Homotetramer. It depends on FMNH2 as a cofactor.

The catalysed reaction is 5-O-(1-carboxyvinyl)-3-phosphoshikimate = chorismate + phosphate. It participates in metabolic intermediate biosynthesis; chorismate biosynthesis; chorismate from D-erythrose 4-phosphate and phosphoenolpyruvate: step 7/7. In terms of biological role, catalyzes the anti-1,4-elimination of the C-3 phosphate and the C-6 proR hydrogen from 5-enolpyruvylshikimate-3-phosphate (EPSP) to yield chorismate, which is the branch point compound that serves as the starting substrate for the three terminal pathways of aromatic amino acid biosynthesis. This reaction introduces a second double bond into the aromatic ring system. This Vibrio anguillarum (strain ATCC 68554 / 775) (Listonella anguillarum) protein is Chorismate synthase.